Reading from the N-terminus, the 633-residue chain is Extracellular metalloproteinase 3 (633 aa).

The signal sequence occupies residues 1 to 18 (MHGLLLAGLLALPMNVLA). Residues 19 to 246 (HPAEHHASNV…VHNVVDYVAS (228 aa)) constitute a propeptide that is removed on maturation. Residues N232 and N410 are each glycosylated (N-linked (GlcNAc...) asparagine). H429 provides a ligand contact to Zn(2+). The active site involves E430. Position 433 (H433) interacts with Zn(2+). N-linked (GlcNAc...) asparagine glycosylation is found at N480 and N622.

The protein belongs to the peptidase M36 family. Zn(2+) is required as a cofactor.

Its subcellular location is the secreted. In terms of biological role, secreted metalloproteinase that allows assimilation of proteinaceous substrates and probably acts as a virulence factor. The polypeptide is Extracellular metalloproteinase 3 (MEP3) (Arthroderma gypseum (strain ATCC MYA-4604 / CBS 118893) (Microsporum gypseum)).